The primary structure comprises 336 residues: Transmembrane protein 19 (336 aa).

The next 6 membrane-spanning stretches (helical) occupy residues 19–39, 49–69, 86–106, 224–244, 250–270, and 313–333; these read IVILCMILCISLSFWIISITA, ISPWRWLVSVLTPIIIVWHGI, GFILTIANYSFFSALLTFFFI, ISSLLGGTSVGVAYFVTQLIF, IAAPQWPIVIYGGMAGLLGSL, and VNLFSSILIALLLPTAAWSFW.

The protein belongs to the TMEM19 family.

The protein localises to the membrane. The polypeptide is Transmembrane protein 19 (tmem19) (Xenopus tropicalis (Western clawed frog)).